We begin with the raw amino-acid sequence, 496 residues long: Alanine aminotransferase 1 (496 aa).

Alanine 2 is subject to N-acetylalanine. Phosphothreonine is present on threonine 22. Lysine 314 carries the N6-(pyridoxal phosphate)lysine modification.

Belongs to the class-I pyridoxal-phosphate-dependent aminotransferase family. Alanine aminotransferase subfamily. As to quaternary structure, homodimer. It depends on pyridoxal 5'-phosphate as a cofactor.

The protein resides in the cytoplasm. It carries out the reaction L-alanine + 2-oxoglutarate = pyruvate + L-glutamate. The protein operates within amino-acid degradation; L-alanine degradation via transaminase pathway; pyruvate from L-alanine: step 1/1. Functionally, catalyzes the reversible transamination between alanine and 2-oxoglutarate to form pyruvate and glutamate. Participates in cellular nitrogen metabolism and also in liver gluconeogenesis starting with precursors transported from skeletal muscles. The chain is Alanine aminotransferase 1 (GPT) from Bos taurus (Bovine).